A 501-amino-acid chain; its full sequence is Ribulose bisphosphate carboxylase large chain (501 aa).

2 residues coordinate substrate: asparagine 141 and threonine 191. The Proton acceptor role is filled by lysine 193. Residue lysine 195 coordinates substrate. Mg(2+) is bound by residues lysine 219, aspartate 221, and glutamate 222. Lysine 219 carries the N6-carboxylysine modification. Histidine 311 functions as the Proton acceptor in the catalytic mechanism. Residues arginine 312, histidine 344, and serine 396 each contribute to the substrate site.

The protein belongs to the RuBisCO large chain family. Type I subfamily. As to quaternary structure, heterohexadecamer of 8 large chains and 8 small chains. Requires Mg(2+) as cofactor.

It catalyses the reaction 2 (2R)-3-phosphoglycerate + 2 H(+) = D-ribulose 1,5-bisphosphate + CO2 + H2O. It carries out the reaction D-ribulose 1,5-bisphosphate + O2 = 2-phosphoglycolate + (2R)-3-phosphoglycerate + 2 H(+). Its function is as follows. RuBisCO catalyzes two reactions: the carboxylation of D-ribulose 1,5-bisphosphate, the primary event in carbon dioxide fixation, as well as the oxidative fragmentation of the pentose substrate. Both reactions occur simultaneously and in competition at the same active site. In Paraburkholderia phymatum (strain DSM 17167 / CIP 108236 / LMG 21445 / STM815) (Burkholderia phymatum), this protein is Ribulose bisphosphate carboxylase large chain.